The chain runs to 261 residues: DNA repair protein RecO (261 aa).

The protein belongs to the RecO family.

Functionally, involved in DNA repair and RecF pathway recombination. This Chlorobium phaeobacteroides (strain DSM 266 / SMG 266 / 2430) protein is DNA repair protein RecO.